Reading from the N-terminus, the 146-residue chain is Large ribosomal subunit protein uL15 (146 aa).

A disordered region spans residues 1 to 54 (MKLHELQPAAGSRKAPKRVGRGTGSGLGRNAGKGEKGQNARSGGGVRPGFEGGQ). Gly residues-rich tracts occupy residues 21–31 (RGTGSGLGRNA) and 42–52 (SGGGVRPGFEG).

The protein belongs to the universal ribosomal protein uL15 family. As to quaternary structure, part of the 50S ribosomal subunit.

Functionally, binds to the 23S rRNA. This chain is Large ribosomal subunit protein uL15, found in Clostridium botulinum (strain Alaska E43 / Type E3).